A 568-amino-acid chain; its full sequence is MALLVGGTLNPTTHLSLRSRAGRNSENVWLRSAASSQTSKGRFCNLTVRAGTPSKPSEPIGPVFTKLKPWQIPKRDWFSKDFLFGASTSAYQIEGAWNEDGKGPSTWDHFCHTYPERISDGTNGDVAANSYHMYEEDVKALKDMGMKVYRFSISWSRILPNGTGKPNQKGIDYYNNLINSLIRHGIVPYVTIWHWDTPQALEDKYGGFLDKQIVNDYKYFAELCFQSFGDRVKNWFTFNEPHTYCCFSYGEGIHAPGRCSPGLDCAVPEGDSLREPYTAGHHILLAHAEAVELFKAHYNKHGDSKIGMAFDVMGYEPYQDSFLDDQARERSIDYNMGWFLEPVVRGDYPFSMRSLIGDRLPMFTKEEQEKLGSLCDIMGLNYYTSRFSKHVDISSDYTPTLNTDDAYASSETTGSDGNEIGPITGTYWIYMYPKGLTDLLLIMKEKYGNPPIFITENGIADVEGDPEMPDPLDDWKRLDYLQRHISAVKDAIDQGADVRGHFTWGLIDNFEWGSGYSSRFGLVYIDKEDGNKRKLKKSAKWFAKFNSVPKTLLKTTNNNATVTASVSV.

The transit peptide at 1-50 (MALLVGGTLNPTTHLSLRSRAGRNSENVWLRSAASSQTSKGRFCNLTVRA) directs the protein to the chloroplast. A beta-D-glucoside contacts are provided by residues Gln92, His194, and 239–240 (NE). The active-site Proton donor is the Glu240. A disulfide bond links Cys259 and Cys265. A beta-D-glucoside-binding positions include Tyr383, Glu456, Trp504, 511-512 (EW), and Phe520. Residue Glu456 is the Nucleophile of the active site.

Belongs to the glycosyl hydrolase 1 family. Homohexamer. As to expression, expressed in seedlings, mesocotyl, coleoptile, leaf sheath, and roots.

The protein resides in the plastid. It is found in the chloroplast. The enzyme catalyses DIMBOA beta-D-glucoside + H2O = DIMBOA + D-glucose. It carries out the reaction DIBOA beta-D-glucoside + H2O = DIBOA + D-glucose. It catalyses the reaction Hydrolysis of terminal, non-reducing beta-D-glucosyl residues with release of beta-D-glucose.. Inhibited by castanospermine, Ag(+) and Cu(2+). 34% inhibition by Zn(2+) and not affected by EDTA. Involved in defense of young plant parts against pests via the production of benzoxazolinones (hydroxamic acids) from hydroxamic acid glucosides. The preferred substrate is DIBOA-beta-D-glucoside. Can also use esculin and genistein glucoside as substrates, but no activity with salicin, p-nitrophenyl-alpha-glucoside or substrates related to cell wall components. The polypeptide is 4-hydroxy-7-methoxy-3-oxo-3,4-dihydro-2H-1,4-benzoxazin-2-yl glucoside beta-D-glucosidase, chloroplastic (Secale cereale (Rye)).